The sequence spans 103 residues: Urease subunit gamma (103 aa).

The protein belongs to the urease gamma subunit family. As to quaternary structure, heterotrimer of UreA (gamma), UreB (beta) and UreC (alpha) subunits. Three heterotrimers associate to form the active enzyme.

The protein localises to the cytoplasm. It catalyses the reaction urea + 2 H2O + H(+) = hydrogencarbonate + 2 NH4(+). It functions in the pathway nitrogen metabolism; urea degradation; CO(2) and NH(3) from urea (urease route): step 1/1. The protein is Urease subunit gamma of Paracoccus denitrificans (strain Pd 1222).